The primary structure comprises 30 residues: Arsenate respiratory reductase iron-sulfur subunit ArrB (30 aa).

Residues C12, C15, C18, and C22 each coordinate [4Fe-4S] cluster.

As to quaternary structure, heterodimer composed of one large subunit (ArrA) and one small subunit (ArrB). It depends on [4Fe-4S] cluster as a cofactor.

It localises to the periplasm. Its function is as follows. Component of the arsenate respiratory reductase (Arr) complex, which catalyzes the reduction of arsenate (As(V)) to arsenite (As(III)). ArrB is probably the electron transfer subunit. In Chrysiogenes arsenatis, this protein is Arsenate respiratory reductase iron-sulfur subunit ArrB.